A 243-amino-acid polypeptide reads, in one-letter code: Chromosome partition protein MukE (243 aa).

The disordered stretch occupies residues 214–243 (DSLALEKQADLNEVDDNDELEDELDDEEHA). The span at 225–243 (NEVDDNDELEDELDDEEHA) shows a compositional bias: acidic residues.

It belongs to the MukE family. In terms of assembly, interacts, and probably forms a ternary complex, with MukF and MukB. The complex formation is stimulated by calcium or magnesium.

It is found in the cytoplasm. The protein resides in the nucleoid. Functionally, involved in chromosome condensation, segregation and cell cycle progression. May participate in facilitating chromosome segregation by condensation DNA from both sides of a centrally located replisome during cell division. Probably acts via its interaction with MukB and MukF. The sequence is that of Chromosome partition protein MukE from Pasteurella multocida (strain Pm70).